Here is a 241-residue protein sequence, read N- to C-terminus: Alpha/beta-tubulin-N-acetyltransferase 9 (241 aa).

An N-acetyltransferase domain is found at 34–181 (EELRHLTASE…VTLRLAVSEP (148 aa)).

The protein belongs to the acetyltransferase family. GNAT subfamily.

The enzyme catalyses N-terminal L-methionyl-[tubulin] + acetyl-CoA = N-terminal N(alpha)-acetyl-L-methionyl-[tubulin] + CoA + H(+). N-acetyltransferase that mediates the acetylation of the N-terminal residues of alpha- and beta-tubulin. The polypeptide is Alpha/beta-tubulin-N-acetyltransferase 9 (Nat9) (Mus musculus (Mouse)).